The following is a 324-amino-acid chain: Putative GTPase PYRAB02490 (324 aa).

GTP is bound by residues 52–60 (GPPGAGKST), Asp194, and 229–231 (VAT).

This sequence belongs to the SIMIBI class G3E GTPase family. ArgK/MeaB subfamily.

In terms of biological role, may have GTPase activity. May also bind and hydrolyze ATP. May function as chaperone. The sequence is that of Putative GTPase PYRAB02490 from Pyrococcus abyssi (strain GE5 / Orsay).